Here is a 431-residue protein sequence, read N- to C-terminus: Ribosomal protein uS12 methylthiotransferase RimO (431 aa).

The MTTase N-terminal domain maps to 4 to 120 (LKLYVIVLGC…LAESINKTKK (117 aa)). Cysteine 13, cysteine 49, cysteine 83, cysteine 150, cysteine 154, and cysteine 157 together coordinate [4Fe-4S] cluster. The region spanning 136–365 (DSDLPYAYVK…MEVQAEISFL (230 aa)) is the Radical SAM core domain. The TRAM domain maps to 368–431 (QRLVGKVIDV…TYDLEGELVE (64 aa)).

The protein belongs to the methylthiotransferase family. RimO subfamily. It depends on [4Fe-4S] cluster as a cofactor.

It localises to the cytoplasm. It catalyses the reaction L-aspartate(89)-[ribosomal protein uS12]-hydrogen + (sulfur carrier)-SH + AH2 + 2 S-adenosyl-L-methionine = 3-methylsulfanyl-L-aspartate(89)-[ribosomal protein uS12]-hydrogen + (sulfur carrier)-H + 5'-deoxyadenosine + L-methionine + A + S-adenosyl-L-homocysteine + 2 H(+). In terms of biological role, catalyzes the methylthiolation of an aspartic acid residue of ribosomal protein uS12. This is Ribosomal protein uS12 methylthiotransferase RimO from Fervidobacterium nodosum (strain ATCC 35602 / DSM 5306 / Rt17-B1).